A 239-amino-acid polypeptide reads, in one-letter code: Transmembrane ascorbate ferrireductase 1 (239 aa).

At 1–7 the chain is on the cytoplasmic side; that stretch reads MAVRINA. Residues 8–28 traverse the membrane as a helical segment; sequence MAVTFVAHALAVIAAIMVLVW. A Cytochrome b561 domain is found at 13-216; it reads VAHALAVIAA…FGAFVVLTAS (204 aa). The Lumenal portion of the chain corresponds to 29–45; sequence SISYRGGLAWEATNKNL. Residues 46–66 form a helical membrane-spanning segment; it reads IFNLHPVLMLIGFIILGGEAI. Histidine 50 contacts heme b. Residues 67–81 are Cytoplasmic-facing; it reads ISYKSLPLEKPVKKL. A helical transmembrane segment spans residues 82 to 102; it reads IHLILHAIALALGIFGICAAF. The heme b site is built by histidine 83 and histidine 117. The Lumenal segment spans residues 103–119; sequence KNHNESHIPNLYSLHSW. Residues 120–140 form a helical membrane-spanning segment; sequence IGIGVISLYGFQWVYSFIVFF. Over 141 to 155 the chain is Cytoplasmic; that stretch reads FPGGSTNLKSGLLPW. Histidine 156 provides a ligand contact to heme b. The helical transmembrane segment at 156–176 threads the bilayer; that stretch reads HAMLGLFVYILAVGNAALGFL. Over 177-193 the chain is Lumenal; sequence EKLTFLENGGLDKYGSE. Residues 194 to 214 traverse the membrane as a helical segment; the sequence is AFLINFTAIITILFGAFVVLT. Residues 215 to 239 lie on the Cytoplasmic side of the membrane; that stretch reads ASAESPSPSPSVSNDDSVDFSYSAI. Residues 217 to 239 form a disordered region; sequence AESPSPSPSVSNDDSVDFSYSAI. Residues 224–239 show a composition bias toward low complexity; that stretch reads PSVSNDDSVDFSYSAI.

As to quaternary structure, homodimer. Heme b serves as cofactor. As to expression, expressed in roots, seedlings and leaves. Lower expression in flowers. Expressed in the L1 layer of the shoot apex, in the epidermis of leaf primordia and young leaves and in vascular bundles. In the differentiation zone of the root, detected in the pericycle and in the epidermis, but not in the cortex. Strongly expressed in the lateral part of the root cap and in the epidermis of the root tip, but not in the meristematic tissue. Not expressed in lateral roots. In mature embryos, expressed in the epidermis, cotyledon tips and root tips.

The protein localises to the vacuole membrane. It catalyses the reaction Fe(3+)(out) + L-ascorbate(in) = monodehydro-L-ascorbate radical(in) + Fe(2+)(out) + H(+). Two-heme-containing cytochrome. Catalyzes ascorbate-dependent trans-membrane ferric-chelate reduction. Able to use dihydrolipoic acid (DHLA) as an alternative substrate to ascorbate. In Arabidopsis thaliana (Mouse-ear cress), this protein is Transmembrane ascorbate ferrireductase 1 (CYB561A).